We begin with the raw amino-acid sequence, 107 residues long: Prostate collagen triple helix protein (107 aa).

A disordered region spans residues 47-107 (PLIPRTPGSP…PTSPLFPFCP (61 aa)). Residues 81 to 100 (VGPKGPMLPLGPSGPVGPTS) show a composition bias toward low complexity.

Expressed in prostate and testis. Weakly or not expressed in other tissues. Overexpressed in prostate cancers.

The protein localises to the cytoplasm. In terms of biological role, may be involved in growth and survival of prostate cancer cells through the TAF-Ibeta pathway. The polypeptide is Prostate collagen triple helix protein (PCOTH) (Homo sapiens (Human)).